The chain runs to 250 residues: Thiamine thiazole synthase (250 aa).

NAD(+) is bound by residues serine 36, 55 to 56 (EE), glycine 63, valine 126, and 152 to 154 (HVD). Residues aspartate 154 and histidine 169 each coordinate Fe cation. Residue methionine 216 coordinates NAD(+). Arginine 226 serves as a coordination point for glycine.

It belongs to the THI4 family. In terms of assembly, homooctamer; tetramer of dimers. The cofactor is Fe(2+).

It catalyses the reaction hydrogen sulfide + glycine + NAD(+) = ADP-5-ethyl-4-methylthiazole-2-carboxylate + nicotinamide + 3 H2O + H(+). The protein operates within cofactor biosynthesis; thiamine diphosphate biosynthesis. In terms of biological role, involved in the biosynthesis of the thiazole moiety of thiamine. Catalyzes the conversion of NAD and glycine to adenosine diphosphate 5-(2-hydroxyethyl)-4-methylthiazole-2-carboxylate (ADT), an adenylated thiazole intermediate, using free sulfide as a source of sulfur. The sequence is that of Thiamine thiazole synthase from Thermotoga maritima (strain ATCC 43589 / DSM 3109 / JCM 10099 / NBRC 100826 / MSB8).